A 367-amino-acid polypeptide reads, in one-letter code: Glutamate 5-kinase (367 aa).

K10 provides a ligand contact to ATP. Substrate is bound by residues S50, D137, and N149. ATP-binding positions include 169 to 170 (TD) and 211 to 217 (TGGMGTK). The PUA domain occupies 275–353 (AGEITVDEGA…QQIDAILGYE (79 aa)).

Belongs to the glutamate 5-kinase family.

It is found in the cytoplasm. It catalyses the reaction L-glutamate + ATP = L-glutamyl 5-phosphate + ADP. It participates in amino-acid biosynthesis; L-proline biosynthesis; L-glutamate 5-semialdehyde from L-glutamate: step 1/2. Catalyzes the transfer of a phosphate group to glutamate to form L-glutamate 5-phosphate. The polypeptide is Glutamate 5-kinase (Enterobacter sp. (strain 638)).